Here is a 210-residue protein sequence, read N- to C-terminus: Large ribosomal subunit protein uL4 (210 aa).

Over residues 41–51 (QNNARQGNASA) the composition is skewed to polar residues. The disordered stretch occupies residues 41–77 (QNNARQGNASAKTRAEVRGGGRKPWKQKGTGRARAGS). Over residues 60–71 (GGRKPWKQKGTG) the composition is skewed to basic residues.

Belongs to the universal ribosomal protein uL4 family. As to quaternary structure, part of the 50S ribosomal subunit.

Functionally, one of the primary rRNA binding proteins, this protein initially binds near the 5'-end of the 23S rRNA. It is important during the early stages of 50S assembly. It makes multiple contacts with different domains of the 23S rRNA in the assembled 50S subunit and ribosome. In terms of biological role, forms part of the polypeptide exit tunnel. In Synechocystis sp. (strain ATCC 27184 / PCC 6803 / Kazusa), this protein is Large ribosomal subunit protein uL4.